The chain runs to 210 residues: MSSSPTSSSSGSPSSHGHRSETEKQRRDDTNDLLNEFKKIVQKSESEKLSKEEVLFRIVKLLSGIQLHHESFSTSPGPIRSIKKIKSDREQVRRNKRVAAYRELRKFIALNNLSSSEEIDKMENLKVLEIIFEVIRGKSITCTVPCLPFPILPFLPVFPVYSPLVFNSYNQFSLYPPHMPTVQIPIVPSSSFEIDALEIEENEKDIDIVG.

The segment covering 1-15 has biased composition (low complexity); the sequence is MSSSPTSSSSGSPSS. The tract at residues 1–33 is disordered; the sequence is MSSSPTSSSSGSPSSHGHRSETEKQRRDDTNDL. Residues 14 to 65 enclose the bHLH domain; sequence SSHGHRSETEKQRRDDTNDLLNEFKKIVQKSESEKLSKEEVLFRIVKLLSGI. Residues 18–33 show a composition bias toward basic and acidic residues; that stretch reads HRSETEKQRRDDTNDL.

Homodimer; binds to DNA as a homodimer. In terms of tissue distribution, expressed in intestinal cells (at protein level).

The protein resides in the nucleus. Its function is as follows. As a homodimer binds DNA via the E-box sequence 5'-CACGTG-3'. Represses lag-2 transcription during embryogenesis via Notch signaling, in an unc-37-dependent manner. Also represses tbx-37 independent of Notch signaling. In the intestine, plays a role in probiotic-mediated protection against infections by pathogens such as S.enterica. This is most likely by positively regulating the expression of genes such as bar-1 upon exposure to probiotic bacteria such as the E.faecium. The sequence is that of Helix-loop-helix protein 26 from Caenorhabditis elegans.